A 153-amino-acid polypeptide reads, in one-letter code: Endoribonuclease YbeY (153 aa).

H116, H120, and H126 together coordinate Zn(2+).

It belongs to the endoribonuclease YbeY family. Zn(2+) is required as a cofactor.

The protein resides in the cytoplasm. Functionally, single strand-specific metallo-endoribonuclease involved in late-stage 70S ribosome quality control and in maturation of the 3' terminus of the 16S rRNA. The sequence is that of Endoribonuclease YbeY from Leifsonia xyli subsp. xyli (strain CTCB07).